Here is a 1041-residue protein sequence, read N- to C-terminus: Toll-like receptor 8 (1041 aa).

The first 26 residues, 1–26 (MENMFLQSSMLTCIFLLISGSCELCA), serve as a signal peptide directing secretion. Residues 27 to 827 (EENFSRSYPC…ELTTCVSDVT (801 aa)) are Extracellular-facing. N-linked (GlcNAc...) asparagine glycans are attached at residues Asn29, Asn42, Asn80, Asn88, and Asn115. Cys36 and Cys49 are joined by a disulfide. LRR repeat units lie at residues 126 to 147 (NLRELLLEDNQLPQIPSGLPES), 148 to 168 (LTELSLIQNNIYNITKEGISR), 171 to 193 (NLKNLYLAWNCYFNKVCEKTNIE), 202 to 223 (NLELLSLSFNSLSHVPPKLPSS), 224 to 244 (LRKLFLSNTQIKYISEEDFKG), and 247 to 268 (NLTLLDLSGNCPRCFNAPFPCV). Residue Asn160 is glycosylated (N-linked (GlcNAc...) asparagine). Residues Cys181 and Cys187 are joined by a disulfide bond. A glycan (N-linked (GlcNAc...) asparagine) is linked at Asn247. Disulfide bonds link Cys257–Cys270 and Cys260–Cys267. Residues Asn285 and Asn293 are each glycosylated (N-linked (GlcNAc...) asparagine). LRR repeat units follow at residues 288–309 (QLRYLNLSSTSLRKINAAWFKN), 312–334 (HLKVLDLEFNYLVGEIASGAFLT), and 338–360 (RLEILDLSFNYIKGSYPQHINIS). Residues Asn358 and Asn362 are each glycosylated (N-linked (GlcNAc...) asparagine). 3 LRR repeats span residues 368 to 389 (SLRALHLRGYVFQELREDDFQP), 395 to 416 (NLSTINLGINFIKQIDFKLFQN), and 419 to 440 (NLEIIYLSENRISPLVKDTRQS). N-linked (GlcNAc...) asparagine glycosylation is found at Asn395 and Asn416. The N-linked (GlcNAc...) asparagine glycan is linked to Asn443. Residues Cys479 and Cys509 are joined by a disulfide bond. LRR repeat units follow at residues 482–503 (YGKALDLSLNSIFFIGPNQFEN), 506–527 (DIACLNLSANSNAQVLSGTEFS), 531–551 (HVKYLDLTNNRLDFDNASALT), and 555–577 (DLEVLDLSYNSHYFRIAGVTHHL). 2 N-linked (GlcNAc...) asparagine glycosylation sites follow: Asn511 and Asn546. N-linked (GlcNAc...) asparagine glycosylation is found at Asn582 and Asn590. LRR repeat units lie at residues 585-606 (NLKVLNLSHNNIYTLTDKYNLE), 609-630 (SLVELVFSGNRLDILWNDDDNR), 640-661 (NLTRLDLSLNRLKHIPNEAFLN), 665-685 (SLTELHINDNMLKFFNWTLLQ), 689-710 (RLELLDLRGNKLLFLTDSLSDF), 713-734 (SLRTLLLSHNRISHLPSGFLSE), and 737-758 (SLKHLDLSSNLLKTINKSALET). 2 N-linked (GlcNAc...) asparagine glycosylation sites follow: Asn640 and Asn680. An N-linked (GlcNAc...) asparagine glycan is attached at Asn752. The 53-residue stretch at 772–824 (NPFECTCDIGDFRRWMDEHLNVKIPRLVDVICASPGDQRGKSIVSLELTTCVS) folds into the LRRCT domain. Residues Cys776 and Cys803 are joined by a disulfide bond. The helical transmembrane segment at 828–848 (AVILFFFTFFITTMVMLAALA) threads the bilayer. At 849–1041 (HHLFYWDVWF…NMYVDSIKQY (193 aa)) the chain is on the cytoplasmic side. Positions 878–1022 (TFYDAYISYD…LFWQTLRNVV (145 aa)) constitute a TIR domain.

Belongs to the Toll-like receptor family. Homodimer. Interacts with MYD88 via their respective TIR domains. Interacts with UNC93B1. Interacts with BTK. Interacts with SMPDL3B. Post-translationally, ubiquitinated by RNF216; leading to degradation by the proteasome. In terms of processing, proteolytic processing occurs in monocytes and monocyte-derived macrophages by both furin-like proprotein convertase and cathepsins. The cleavage is necessary for dimer formation and subsequent activation. As to expression, expressed in myeloid dendritic cells, monocytes, and monocyte-derived dendritic cells.

Its subcellular location is the endosome membrane. Its activity is regulated as follows. Activated by RNAs having enough uridines. Functionally, endosomal receptor that plays a key role in innate and adaptive immunity. Controls host immune response against pathogens through recognition of RNA degradation products specific to microorganisms that are initially processed by RNASET2. Recognizes GU-rich single-stranded RNA (GU-rich RNA) derived from SARS-CoV-2, SARS-CoV-1 and HIV-1 viruses. Upon binding to agonists, undergoes dimerization that brings TIR domains from the two molecules into direct contact, leading to the recruitment of TIR-containing downstream adapter MYD88 through homotypic interaction. In turn, the Myddosome signaling complex is formed involving IRAK4, IRAK1, TRAF6, TRAF3 leading to activation of downstream transcription factors NF-kappa-B and IRF7 to induce pro-inflammatory cytokines and interferons, respectively. The protein is Toll-like receptor 8 of Homo sapiens (Human).